The following is a 129-amino-acid chain: Large-conductance mechanosensitive channel (129 aa).

The next 3 helical transmembrane spans lie at 8–28, 30–50, and 67–87; these read FAFRGNVIDLAVGVILGAAFS, IIKSLVDSIFMPLIGIIIGGI, and GQFLQASIEFILIAFALFLFV.

Belongs to the MscL family. As to quaternary structure, homopentamer.

The protein resides in the cell membrane. In terms of biological role, channel that opens in response to stretch forces in the membrane lipid bilayer. May participate in the regulation of osmotic pressure changes within the cell. The protein is Large-conductance mechanosensitive channel of Exiguobacterium sibiricum (strain DSM 17290 / CCUG 55495 / CIP 109462 / JCM 13490 / 255-15).